The primary structure comprises 947 residues: Bromodomain testis-specific protein (947 aa).

One can recognise a Bromo 1 domain in the interval 27–133 (RLTNQLQYLQ…KLFMQKLSQM (107 aa)). Residue Asn109 participates in JQ1 binding. Ser187 carries the phosphoserine modification. The tract at residues 202 to 228 (QTAAQVTKGVKRKADTTTPATSAVKAS) is disordered. Residues 209-220 (KGVKRKADTTTP) carry the Nuclear localization signal motif. Over residues 217-228 (TTTPATSAVKAS) the composition is skewed to polar residues. Residues 267–376 (VKVTEQLRHC…DVFETHFSKI (110 aa)) form the Bromo 2 domain. Disordered stretches follow at residues 395–420 (ETTGRENTNEASSEGNSSDDSEDERV), 444–511 (PFRK…KPMN), 610–698 (NNQL…IPPE), and 882–924 (NKCS…RRRE). Positions 417-470 (DERVKRLAKLQEQLKAVHQQLQVLSQVPFRKLNKKKEKSKKEKKKEKVNNSNEN) form a coiled coil. A compositionally biased stretch (basic residues) spans 447–462 (KLNKKKEKSKKEKKKE). A compositionally biased stretch (basic and acidic residues) spans 470-481 (NPRKMCEQMRLK). Basic residues predominate over residues 482–494 (EKSKRNQPKKRKQ). Positions 500-582 (KSEDEDNAKP…ACLRKRPLKP (83 aa)) constitute an NET domain. Residues 591–621 (KEELHSQKKQELEKRLLDVNNQLNSRKRQTK) adopt a coiled-coil conformation. Residues 637–662 (LSESSSSSSSSSESESSSSDLSSSDS) are compositionally biased toward low complexity. Composition is skewed to basic and acidic residues over residues 674–692 (TEVKPNDSPSKENVKKMKN) and 885–924 (SGEEQKEHQQSSEAQDKSKLWLLKDRDLARQKEQERRRRE).

Belongs to the BET family. As to quaternary structure, interacts with mRNA splicing machinery proteins SRSF2, DDX5, HNRNPK and TARDBP. Interacts with the acetylated N-terminus of histone H1, H2, H3 and H4. Interacts with P-TEFb components CDK9 and CCNT1/cyclin-T1. Interacts with SMARCE1. Interacts with the acetylated N-terminus of histone H1.4, H2A, H2B, H3 and H4. Ubiquitinated in a SPOP-dependent manner, leading to proteasomal degradation. Testis-specific. A 3-fold higher expression is seen in adult testis than in embryo testis. Expression seems to be correlated with histone H4 hyperacetylation during the haploid phase of spermatogenesis (spermiogenesis). No expression, or very low expression is seen in patients' testes with abnormal spermatogenesis. Expressed in cancers such as non-small cell lung cancer and squamous cell carcinomas of the head and neck as well as of esophagus, but not in melanoma or in cancers of the colon, breast, kidney and bladder.

Its subcellular location is the nucleus. Testis-specific chromatin protein that specifically binds histone H4 acetylated at 'Lys-5' and 'Lys-8' (H4K5ac and H4K8ac, respectively) and plays a key role in spermatogenesis. Required in late pachytene spermatocytes: plays a role in meiotic and post-meiotic cells by binding to acetylated histones at the promoter of specific meiotic and post-meiotic genes, facilitating their activation at the appropriate time. In the post-meiotic phase of spermatogenesis, binds to hyperacetylated histones and participates in their general removal from DNA. Also recognizes and binds a subset of butyrylated histones: able to bind histone H4 butyrylated at 'Lys-8' (H4K8ac), while it is not able to bind H4 butyrylated at 'Lys-5' (H4K5ac). Also acts as a component of the splicing machinery in pachytene spermatocytes and round spermatids and participates in 3'-UTR truncation of specific mRNAs in post-meiotic spermatids. Required for chromocenter organization, a structure comprised of peri-centromeric heterochromatin. The protein is Bromodomain testis-specific protein (BRDT) of Homo sapiens (Human).